Consider the following 407-residue polypeptide: Arginine biosynthesis bifunctional protein ArgJ (407 aa).

Positions 157, 183, 194, 280, 402, and 407 each coordinate substrate. Catalysis depends on threonine 194, which acts as the Nucleophile.

It belongs to the ArgJ family. In terms of assembly, heterotetramer of two alpha and two beta chains.

The protein resides in the cytoplasm. It catalyses the reaction N(2)-acetyl-L-ornithine + L-glutamate = N-acetyl-L-glutamate + L-ornithine. The catalysed reaction is L-glutamate + acetyl-CoA = N-acetyl-L-glutamate + CoA + H(+). It participates in amino-acid biosynthesis; L-arginine biosynthesis; L-ornithine and N-acetyl-L-glutamate from L-glutamate and N(2)-acetyl-L-ornithine (cyclic): step 1/1. The protein operates within amino-acid biosynthesis; L-arginine biosynthesis; N(2)-acetyl-L-ornithine from L-glutamate: step 1/4. In terms of biological role, catalyzes two activities which are involved in the cyclic version of arginine biosynthesis: the synthesis of N-acetylglutamate from glutamate and acetyl-CoA as the acetyl donor, and of ornithine by transacetylation between N(2)-acetylornithine and glutamate. This is Arginine biosynthesis bifunctional protein ArgJ from Bacillus cereus (strain ATCC 10987 / NRS 248).